The primary structure comprises 185 residues: uncharacterized protein (185 aa).

Residues 17–137 (GKSSIMNALF…QKPIIVVINK (121 aa)) enclose the G domain.

This is an uncharacterized protein from Methanocaldococcus jannaschii (strain ATCC 43067 / DSM 2661 / JAL-1 / JCM 10045 / NBRC 100440) (Methanococcus jannaschii).